The sequence spans 187 residues: GTP cyclohydrolase 1 (187 aa).

Positions 81, 84, and 152 each coordinate Zn(2+).

It belongs to the GTP cyclohydrolase I family. In terms of assembly, toroid-shaped homodecamer, composed of two pentamers of five dimers.

The catalysed reaction is GTP + H2O = 7,8-dihydroneopterin 3'-triphosphate + formate + H(+). The protein operates within cofactor biosynthesis; 7,8-dihydroneopterin triphosphate biosynthesis; 7,8-dihydroneopterin triphosphate from GTP: step 1/1. In Pyrobaculum aerophilum (strain ATCC 51768 / DSM 7523 / JCM 9630 / CIP 104966 / NBRC 100827 / IM2), this protein is GTP cyclohydrolase 1.